The chain runs to 223 residues: CKLF-like MARVEL transmembrane domain-containing protein 5 (223 aa).

One can recognise an MARVEL domain in the interval 29–213 (FLTSHKGILL…DAFKIYRTEM (185 aa)). 4 helical membrane-spanning segments follow: residues 35–55 (GILL…FTAS), 56–76 (ISAY…FLFL), 162–182 (FLRC…AVTS), and 186–206 (AAIA…YDAF).

Belongs to the chemokine-like factor family. Highly expressed in the brain.

The protein resides in the membrane. The sequence is that of CKLF-like MARVEL transmembrane domain-containing protein 5 (CMTM5) from Homo sapiens (Human).